Here is a 339-residue protein sequence, read N- to C-terminus: Transcription factor IIIA (339 aa).

C2H2-type zinc fingers lie at residues 13 to 37, 43 to 67, 73 to 98, 105 to 129, 135 to 159, 162 to 188, 192 to 214, 221 to 246, and 252 to 276; these read YICSFADCGASYNKNWKLRAHLCKH, FPCKEEGCDKGFTSLHHLTRHSITH, FKCDSDKCDLTFTTKANMKKHFNRFH, YVCHFEGCDKAFKKHNQLKVHQFTH, YKCPHEGCDKSFSVPSCLKRHEKVH, YPCKKDDSCLFVGKTWTLYLKHVKECH, VMCDECKRTFKHKDYLRNHKKTH, YCCPRDGCERSYTTEFNLQSHMQSFH, and FACEHAECGKSFAMKKSLERHSVVH. Basic and acidic residues-rich tracts occupy residues 275 to 288 and 305 to 316; these read VHDPEKRKLKEKCP and KSKEKSAAKATE. The tract at residues 275 to 339 is disordered; it reads VHDPEKRKLK…ETKGSLVIEK (65 aa).

In terms of tissue distribution, synthesized in oocytes and, in much lower levels, in somatic cells.

It is found in the nucleus. In terms of biological role, involved in ribosomal large subunit biogenesis. Interacts with the internal control region (ICR) of approximately 50 bases within the 5S RNA genes, is required for correct transcription of these genes by RNA polymerase III. Also binds the transcribed 5S RNA's. The polypeptide is Transcription factor IIIA (gtf3a) (Xenopus borealis (Kenyan clawed frog)).